We begin with the raw amino-acid sequence, 72 residues long: Translation initiation factor IF-1 (72 aa).

The S1-like domain maps to 1–72 (MSKEDAIEVM…TRGRIVYRYK (72 aa)).

Belongs to the IF-1 family. Component of the 30S ribosomal translation pre-initiation complex which assembles on the 30S ribosome in the order IF-2 and IF-3, IF-1 and N-formylmethionyl-tRNA(fMet); mRNA recruitment can occur at any time during PIC assembly.

Its subcellular location is the cytoplasm. One of the essential components for the initiation of protein synthesis. Stabilizes the binding of IF-2 and IF-3 on the 30S subunit to which N-formylmethionyl-tRNA(fMet) subsequently binds. Helps modulate mRNA selection, yielding the 30S pre-initiation complex (PIC). Upon addition of the 50S ribosomal subunit IF-1, IF-2 and IF-3 are released leaving the mature 70S translation initiation complex. In Koribacter versatilis (strain Ellin345), this protein is Translation initiation factor IF-1.